A 198-amino-acid polypeptide reads, in one-letter code: Transcriptional regulator GfcR (198 aa).

The protein belongs to the purine/pyrimidine phosphoribosyltransferase family. GfcR subfamily.

This Thermoplasma acidophilum (strain ATCC 25905 / DSM 1728 / JCM 9062 / NBRC 15155 / AMRC-C165) protein is Transcriptional regulator GfcR.